The chain runs to 1539 residues: Lysine-specific demethylase 5D (1539 aa).

One can recognise a JmjN domain in the interval 14-55; the sequence is CPVFEPSWAEFQDPLGYIAKIRPIAEKSGICKIRPPADWQPP. The ARID domain maps to 79-169; that stretch reads TRVKLNYLDQ…IIYPYEMFQS (91 aa). Positions 192-228 are disordered; sequence PHSIPLRQSVQPSKFSSYSRRAKRLQPDPEPTEEDIE. Residues 197-210 are compositionally biased toward polar residues; the sequence is LRQSVQPSKFSSYS. Residues lysine 205, lysine 229, lysine 244, and lysine 272 each participate in a glycyl lysine isopeptide (Lys-Gly) (interchain with G-Cter in SUMO2) cross-link. Phosphoserine occurs at positions 291 and 307. Residues 316–362 form a PHD-type 1 zinc finger; the sequence is ICQVCSRGDEDDKLLFCDGCDDNYHIFCLLPPLPEIPRGIWRCPKCI. Tyrosine 430 is a binding site for 2-oxoglutarate. Positions 458-624 constitute a JmjC domain; that stretch reads EYATSGWNLN…AGRQCIEHYR (167 aa). 2 residues coordinate Fe cation: histidine 504 and glutamate 506. Serine 512, asparagine 514, and lysine 522 together coordinate 2-oxoglutarate. Fe cation is bound at residue histidine 592. The C5HC2 zinc finger occupies 697 to 749; the sequence is CIKCKTTCFLSALACYDCPDGLVCLSHINDLCKCSSSRQYLRYRYTLDELPTM. The residue at position 884 (serine 884) is a Phosphoserine. The segment at 1174 to 1235 adopts a PHD-type 2 zinc-finger fold; it reads ICVCGQVPAG…DTKFLCPLCM (62 aa). Residue serine 1346 is modified to Phosphoserine. The segment at 1429–1521 is disordered; it reads HQGSRTRSRA…QHKDSGSSAA (93 aa). Positions 1432-1446 are enriched in basic residues; the sequence is SRTRSRALERRRRRQ. Residues 1477–1491 are compositionally biased toward basic and acidic residues; it reads GREEEHYQEKADREN. Residues 1494–1521 show a composition bias toward polar residues; that stretch reads LTPSTDHSPFLKGNQNSLQHKDSGSSAA.

It belongs to the JARID1 histone demethylase family. In terms of assembly, interacts with PCGF6, MSH5, ZMYND8, AR. The cofactor is L-ascorbate. It depends on Fe(2+) as a cofactor. In terms of tissue distribution, expression is highly down-regulated in metastatic prostate tumors.

It localises to the nucleus. It carries out the reaction N(6),N(6),N(6)-trimethyl-L-lysyl(4)-[histone H3] + 3 2-oxoglutarate + 3 O2 = L-lysyl(4)-[histone H3] + 3 formaldehyde + 3 succinate + 3 CO2. Histone demethylase that specifically demethylates 'Lys-4' of histone H3, thereby playing a central role in histone code. Does not demethylate histone H3 'Lys-9', H3 'Lys-27', H3 'Lys-36', H3 'Lys-79' or H4 'Lys-20'. Demethylates trimethylated and dimethylated but not monomethylated H3 'Lys-4'. May play a role in spermatogenesis. Involved in transcriptional repression of diverse metastasis-associated genes; in this function seems to cooperate with ZMYND8. Suppresses prostate cancer cell invasion. Regulates androgen receptor (AR) transcriptional activity by demethylating H3K4me3 active transcription marks. This chain is Lysine-specific demethylase 5D (KDM5D), found in Homo sapiens (Human).